The chain runs to 250 residues: Bacteriorhodopsin (250 aa).

Residues 1 to 18 are Extracellular-facing; that stretch reads MCCAALAPPMAATVGPES. The chain crosses the membrane as a helical span at residues 19–37; the sequence is IWLWIGTIGMTLGTLYFVG. Over 38 to 51 the chain is Cytoplasmic; the sequence is RGRGVRDRKMQEFY. A helical transmembrane segment spans residues 52–70; it reads IITIFITTIAAAMYFAMAT. Residues 71-86 lie on the Extracellular side of the membrane; it reads GFGVTEVMVGDEALTI. Residues 87-104 form a helical membrane-spanning segment; sequence YWARYADWLFTTPLLLLD. The Cytoplasmic segment spans residues 105 to 115; the sequence is LSLLAGANRNT. A helical transmembrane segment spans residues 116 to 135; it reads IATLIGLDVFMIGTGAIAAL. Topologically, residues 136–142 are extracellular; the sequence is SSTPGTR. The chain crosses the membrane as a helical span at residues 143–162; that stretch reads IAWWAISTGALLALLYVLVG. The Cytoplasmic segment spans residues 163 to 180; it reads TLSENARNRAPEVASLFG. A helical transmembrane segment spans residues 181–199; sequence RLRNLVIALWFLYPVVWIL. At 200 to 212 the chain is on the extracellular side; that stretch reads GTEGTFGILPLYW. Residues 213–232 form a helical membrane-spanning segment; sequence ETAAFMVLDLSAKVGFGVIL. At K225 the chain carries N6-(retinylidene)lysine. Residues 233–250 lie on the Cytoplasmic side of the membrane; sequence LQSRSVLERVATPTAAPT.

Belongs to the archaeal/bacterial/fungal opsin family.

The protein localises to the cell membrane. Light-driven proton pump. The protein is Bacteriorhodopsin (bop) of Haloterrigena sp. (strain arg-4).